A 541-amino-acid polypeptide reads, in one-letter code: Membrane protein insertase YidC (541 aa).

6 consecutive transmembrane segments (helical) span residues 6–26, 326–346, 349–369, 420–440, 457–477, and 500–520; these read NLLL…WESD, VVDY…LMFF, LVHN…GLLY, GGCL…WVLL, LSVQ…MWAM, and MIFT…WLVG.

It belongs to the OXA1/ALB3/YidC family. Type 1 subfamily. Interacts with the Sec translocase complex via SecD. Specifically interacts with transmembrane segments of nascent integral membrane proteins during membrane integration.

Its subcellular location is the cell inner membrane. Functionally, required for the insertion and/or proper folding and/or complex formation of integral membrane proteins into the membrane. Involved in integration of membrane proteins that insert both dependently and independently of the Sec translocase complex, as well as at least some lipoproteins. Aids folding of multispanning membrane proteins. The protein is Membrane protein insertase YidC of Shewanella amazonensis (strain ATCC BAA-1098 / SB2B).